The following is a 388-amino-acid chain: Proline-rich protein 5 (388 aa).

2 interaction with RICTOR regions span residues 10 to 95 (MSSP…LTKG) and 188 to 218 (HESRGVTEDYLRLETLVQKVVSPYLGTYGLH). The interval 12–31 (SPSLSDLGKREPAAAADERG) is disordered. The span at 18–31 (LGKREPAAAADERG) shows a compositional bias: basic and acidic residues. The residue at position 252 (Ser-252) is a Phosphoserine. Residues 254-388 (SYNTPLLNPV…EGSGGRQSVV (135 aa)) form a disordered region. The span at 336–346 (TRSSLPRSSPE) shows a compositional bias: polar residues.

It belongs to the PROTOR family. In terms of assembly, associated component of the mechanistic target of rapamycin complex 2 (mTORC2). Binds directly to MTOR and RICTOR within the TORC2 complex. Most abundant in kidney and liver. Also highly expressed in brain, spleen, testis and placenta. Overexpressed in several colorectal tumors.

Its function is as follows. Associated subunit of mTORC2, which regulates cell growth and survival in response to hormonal signals. mTORC2 is activated by growth factors, but, in contrast to mTORC1, seems to be nutrient-insensitive. mTORC2 seems to function upstream of Rho GTPases to regulate the actin cytoskeleton, probably by activating one or more Rho-type guanine nucleotide exchange factors. PRR5 plays an important role in regulation of PDGFRB expression and in modulation of platelet-derived growth factor signaling. May act as a tumor suppressor in breast cancer. This is Proline-rich protein 5 (PRR5) from Homo sapiens (Human).